The sequence spans 232 residues: Sensory rhodopsin III (232 aa).

A run of 7 helical transmembrane segments spans residues 5-25 (IVWY…FVWF), 39-59 (LPPI…LIAG), 73-93 (FADW…LAGV), 100-120 (LAVA…SMSG), 125-145 (IAFA…IKTF), 168-188 (VVTW…TGII), and 194-214 (NFLV…ILLV). Lysine 205 is modified (N6-(retinylidene)lysine).

It belongs to the archaeal/bacterial/fungal opsin family. As to quaternary structure, interacts with HtrM. The covalent binding of retinal to the apoprotein, bacterioopsin, generates bacteriorhodopsin.

It localises to the membrane. In terms of biological role, sensory rhodopsin. Associates with an unusual transducer lacking a methyl-accepting transducer domain found in all other photosensory transducers. The chromophore is all-trans-retinal in the dark. The chain is Sensory rhodopsin III (xop2) from Haloarcula marismortui (strain ATCC 43049 / DSM 3752 / JCM 8966 / VKM B-1809) (Halobacterium marismortui).